Reading from the N-terminus, the 694-residue chain is MAKTYLLEIGLEEMPAHVVTPSVLQLKERMIKFLKDARLDFEDVKTFSTPRRLTVQVLGLADKQADVKKEVRGPAKKIAQDADGNWTKAAIGFSKGQGASTDDIVFKDVKGTPYVFVQTFTAGKTAAEVLTGGIKDVITKMNFPTMMKWSTYSFKYIRPIRWIVSLLDDEVVPVQILDVAAGRVSRGHRFLGHDVEIATAADYEADLASVQVVADAAKRKATIREQIAALANERDWQIKVNEDLLEEVNNLVEYPTAFAGDFDTKYLTIPDEVLITSMRDHQRFFYVTDAEDNLLPHFVSVRNGNTDHLENVALGNQKVLTARLEDAAFFYHEDQQHSIQEYVERLKKVSFHDKIGTMYEKMQRVMIISDFLADRFGLTETEKNQLHRAAQIYKFDLVTGMVGEFPELQGVMGDKYAVLKGEDPAVGQAIREHYMPISADGDLPKSKVGAVLAIADKVDSITSFFAVGLTPSGSNDPFALRRQAFGIVRIVREQGWDFPIRQLEADIQKELVAHDATYNLDFEKQTAPVADFLTDRVKQWFNNRKIRYDIVDTVIKGSRQDIREMFKAADVLNAHQDDPQFKDTIEAFTRLLRITAKAKLAADDLTVDPSLFENEAEQHLYDAVLELQKQFTPAMSMEDRFKALAALRPLIVDYFEQTMVMSKDEKVRDNHLKQLLTIAQMINVMGDLNQLIVK.

The protein belongs to the class-II aminoacyl-tRNA synthetase family. As to quaternary structure, tetramer of two alpha and two beta subunits.

Its subcellular location is the cytoplasm. The enzyme catalyses tRNA(Gly) + glycine + ATP = glycyl-tRNA(Gly) + AMP + diphosphate. In Lactiplantibacillus plantarum (strain ATCC BAA-793 / NCIMB 8826 / WCFS1) (Lactobacillus plantarum), this protein is Glycine--tRNA ligase beta subunit.